A 301-amino-acid polypeptide reads, in one-letter code: Probable 5-dehydro-4-deoxyglucarate dehydratase (301 aa).

Belongs to the DapA family.

It carries out the reaction 5-dehydro-4-deoxy-D-glucarate + H(+) = 2,5-dioxopentanoate + CO2 + H2O. The protein operates within carbohydrate acid metabolism; D-glucarate degradation; 2,5-dioxopentanoate from D-glucarate: step 2/2. In Cereibacter sphaeroides (strain ATCC 17029 / ATH 2.4.9) (Rhodobacter sphaeroides), this protein is Probable 5-dehydro-4-deoxyglucarate dehydratase.